The following is a 113-amino-acid chain: 4-cresol dehydrogenase [hydroxylating] cytochrome c subunit (113 aa).

The first 33 residues, 1 to 33, serve as a signal peptide directing secretion; sequence MTFPFSGAAVKRMLVTGVVLPFGLLVAAGQAQA. 4 residues coordinate heme c: Cys-48, Cys-51, His-52, and Met-83.

Tetramer of two cytochrome subunits and two flavoprotein subunits. Post-translationally, binds 1 heme c group covalently per subunit.

It functions in the pathway aromatic compound metabolism; p-cresol degradation. This is the heme-containing component of the p-cresol methylhydroxylase. It accepts electrons from the flavoprotein subunit. The sequence is that of 4-cresol dehydrogenase [hydroxylating] cytochrome c subunit (pchC) from Pseudomonas putida (Arthrobacter siderocapsulatus).